The following is a 372-amino-acid chain: N-methyl-L-tryptophan oxidase (372 aa).

Asp4 to His34 serves as a coordination point for FAD. S-8alpha-FAD cysteine is present on Cys308.

It belongs to the MSOX/MTOX family. MTOX subfamily. As to quaternary structure, monomer. Requires FAD as cofactor.

It catalyses the reaction N(alpha)-methyl-L-tryptophan + O2 + H2O = L-tryptophan + formaldehyde + H2O2. Catalyzes the oxidative demethylation of N-methyl-L-tryptophan. The protein is N-methyl-L-tryptophan oxidase of Escherichia coli (strain K12 / DH10B).